The chain runs to 245 residues: Ribonuclease 3 (245 aa).

The 130-residue stretch at 19 to 148 folds into the RNase III domain; it reads FKVFQEKIGI…FIGALYLDQG (130 aa). Glu-61 lines the Mg(2+) pocket. Asp-65 is a catalytic residue. Mg(2+)-binding residues include Asp-134 and Glu-137. Glu-137 is an active-site residue. Positions 174–243 constitute a DRBM domain; it reads DYKSQLQELI…AAEALKKLKE (70 aa).

Belongs to the ribonuclease III family. As to quaternary structure, homodimer. Mg(2+) serves as cofactor.

Its subcellular location is the cytoplasm. The enzyme catalyses Endonucleolytic cleavage to 5'-phosphomonoester.. In terms of biological role, digests double-stranded RNA. Involved in the processing of primary rRNA transcript to yield the immediate precursors to the large and small rRNAs (23S and 16S). Processes some mRNAs, and tRNAs when they are encoded in the rRNA operon. Processes pre-crRNA and tracrRNA of type II CRISPR loci if present in the organism. This Bacillus cereus (strain ZK / E33L) protein is Ribonuclease 3.